Here is a 306-residue protein sequence, read N- to C-terminus: MALPSSVESLLSTVWDFITINRLLTGAGIYFLLLNAKGLPGVWHYRLFKGLFIELVWKRSTTPAPLLDSQGRPRLYSYFVTECSNPVIECDYNLHKSNSTFFSDLDINRTQLMMTHFKHVLSTASMPRKTKTANGNGDDQKRKRPLMMAMGGVSCLFHREIKPLQRYEVWSRVLAWDEKWVYVVSYFVKKGSLSRDGNFKGDLDLDPKVNAKVVLASCMARYVFKEGRITVKPERVLQECGLFPLAEEAVAGEKAEKASVDSWGKEQFEEARQKGLVTAGKFSGLEVLPLMTGFGESGVLGRYNDF.

This sequence belongs to the lcsJ thioesterase family.

Part of the gene cluster that mediates the biosynthesis of aspercryptins, linear lipopeptides built from six amino acids including 2 highly unusual and nonproteogenic amino acids, 2-amino-octanoic acid (2aoa) and 2-amino-dodecanol (2adol). The core structure of aspercryptins is as follows: Ser/Ala-Thr-Ile/Val-2aoa-Asn-2adol. The first step of aspercryptin biosynthesis is the generation of the fatty acid precursors, octanoic and dodecanoic acids, by the FAS subunits atnF and atnM. The fatty acid precursors are likely transformed into the corresponding alpha-amino fatty acids in three steps. First, they are hydroxylated by the cytochrome P450 monooxygenase atnE, then oxidized to the corresponding alpha-keto acids by the NAD(P)-dependent oxidoreductase atnD, and finally converted to the alpha-amino fatty acids by the PLP-dependent aminotransferases atnH or atnJ. the alpha-amino fatty acids, 2-amino-octanoic and 2-amino-dodecanoic acids, are recognized, activated, and covalently tethered to the NRPS atnA by its fourth and sixth adenylation domains. The second module of atnA is the Thr module and contains an epimerase (E) domain responsible for the epimerization of Thr to D-allo-Thr. Additionally, despite atnA having only one epimerase domain, the first amino acid of aspercryptin A1 is D-Ser, suggesting that serine is either loaded directly as D-Ser on the first module or that the epimerase domain in the threonine module epimerizes both L-Ser and L-Thr. After condensation of the hexapeptide of aspercryptin, the C-terminal reductase (TE) domain might be involved in the reductive release and production of the aldehyde hexapeptide. Further reduction would generate aspercryptins. The variety of aspercryptins produced reflects the flexibility of the atnA NRPS, allowing incorporation of alanine instead of serine, valine for isoleucine, and a C10 fatty amino alcohol instead of the C12 version. AtnB seems to be involved in the selectivity for Ile versus Val by the third module. Moreover, type B, C and D aspercryptins have an additional N-terminal cichorine, acetyl and propionyl group respectively. This is Probable thioesterase atnL from Emericella nidulans (strain FGSC A4 / ATCC 38163 / CBS 112.46 / NRRL 194 / M139) (Aspergillus nidulans).